A 336-amino-acid polypeptide reads, in one-letter code: Serpentine receptor class alpha-10 (336 aa).

At 1 to 28 the chain is on the extracellular side; sequence MGPITANSSKCATEDQMILQTSLLLRIN. The chain crosses the membrane as a helical span at residues 29–49; it reads VIIMTIVAIITFILTYKALFI. The Cytoplasmic segment spans residues 50 to 61; sequence LKIRPIFHSSTK. A helical transmembrane segment spans residues 62–82; sequence ILLYTSLLFVNVHAVIFMVIQ. Residues 83–107 are Extracellular-facing; it reads NTALIRSFTLSDKPCEIMRTTLECR. A helical transmembrane segment spans residues 108 to 128; the sequence is FQNHVLIFGIAGVNFNQFGLT. At 129–148 the chain is on the cytoplasmic side; sequence VDRLLATIIPQSYSHMGALP. A helical membrane pass occupies residues 149–169; the sequence is GVILSVLVVACSIAAPLIIAI. Over 170–192 the chain is Extracellular; the sequence is GDPYDDIVPNCFFFPEHSAPRAN. The helical transmembrane segment at 193–213 threads the bilayer; sequence IFLVTLSTLVITSIFLNFIII. Topologically, residues 214-243 are cytoplasmic; that stretch reads YANKKLEKGCRTRFYVTQRYQKREALISTR. The helical transmembrane segment at 244–264 threads the bilayer; it reads IISYIAASQFLGLTLYSTMVL. The Extracellular segment spans residues 265–280; sequence TLRLHKSMIPISIYHN. The helical transmembrane segment at 281–301 threads the bilayer; that stretch reads MVWWAYTVPFAAVSLPALLIY. The Cytoplasmic segment spans residues 302–336; it reads RINQVGSNRKRVINRITAKVETQEEHMKSLKELWA.

Belongs to the nematode receptor-like protein sra family. Expressed in the URX sensory neuron, the ALA interneuron and in additional interneurons, pharyngeal neurons and muscle.

The protein resides in the membrane. In Caenorhabditis elegans, this protein is Serpentine receptor class alpha-10 (sra-10).